Consider the following 435-residue polypeptide: NADH-quinone oxidoreductase subunit D (435 aa).

It belongs to the complex I 49 kDa subunit family. NDH-1 is composed of 14 different subunits. Subunits NuoB, C, D, E, F, and G constitute the peripheral sector of the complex.

The protein localises to the cell inner membrane. It carries out the reaction a quinone + NADH + 5 H(+)(in) = a quinol + NAD(+) + 4 H(+)(out). Functionally, NDH-1 shuttles electrons from NADH, via FMN and iron-sulfur (Fe-S) centers, to quinones in the respiratory chain. The immediate electron acceptor for the enzyme in this species is believed to be ubiquinone. Couples the redox reaction to proton translocation (for every two electrons transferred, four hydrogen ions are translocated across the cytoplasmic membrane), and thus conserves the redox energy in a proton gradient. In Xylella fastidiosa (strain M12), this protein is NADH-quinone oxidoreductase subunit D.